The chain runs to 127 residues: MRHLKSGRRLGRKTSHREAMFRNMVTSLFAHEKITTTDAKAKEIRSVAEKMITLGKRGDLHSTRIAAAFIREKSVVTKLFSTIAPRYKERAGGYTRIIKVGSRNGDAAPMSIIELVEEEFTPKASRA.

Belongs to the bacterial ribosomal protein bL17 family. Part of the 50S ribosomal subunit. Contacts protein L32.

This chain is Large ribosomal subunit protein bL17, found in Pelobacter propionicus (strain DSM 2379 / NBRC 103807 / OttBd1).